The primary structure comprises 399 residues: Coenzyme A biosynthesis bifunctional protein CoaBC (399 aa).

The phosphopantothenoylcysteine decarboxylase stretch occupies residues 1–190; it reads MQSLAGKKIL…FAPKILVGKR (190 aa). Catalysis depends on cysteine 159, which acts as the Proton donor. The segment at 191 to 399 is phosphopantothenate--cysteine ligase; the sequence is VLITAGPTRE…AVMHLIHEQM (209 aa). CTP-binding positions include aspartate 279, lysine 289, 307–310, phenylalanine 326, lysine 340, and lysine 344; that span reads PDIV.

It in the N-terminal section; belongs to the HFCD (homo-oligomeric flavin containing Cys decarboxylase) superfamily. The protein in the C-terminal section; belongs to the PPC synthetase family. Mg(2+) serves as cofactor. Requires FMN as cofactor.

The catalysed reaction is N-[(R)-4-phosphopantothenoyl]-L-cysteine + H(+) = (R)-4'-phosphopantetheine + CO2. It catalyses the reaction (R)-4'-phosphopantothenate + L-cysteine + CTP = N-[(R)-4-phosphopantothenoyl]-L-cysteine + CMP + diphosphate + H(+). It participates in cofactor biosynthesis; coenzyme A biosynthesis; CoA from (R)-pantothenate: step 2/5. Its pathway is cofactor biosynthesis; coenzyme A biosynthesis; CoA from (R)-pantothenate: step 3/5. Catalyzes two sequential steps in the biosynthesis of coenzyme A. In the first step cysteine is conjugated to 4'-phosphopantothenate to form 4-phosphopantothenoylcysteine. In the second step the latter compound is decarboxylated to form 4'-phosphopantotheine. This is Coenzyme A biosynthesis bifunctional protein CoaBC from Vibrio cholerae serotype O1 (strain ATCC 39315 / El Tor Inaba N16961).